A 1710-amino-acid chain; its full sequence is Neurexin-2 (1710 aa).

The first 28 residues, 1–28 (MALGSRWQPPPQLPPLLLLLALAAGVRG), serve as a signal peptide directing secretion. Residues 29-206 (LEFGGGPGQW…LRGAAADPLC (178 aa)) form the Laminin G-like 1 domain. The Extracellular portion of the chain corresponds to 29–1634 (LEFGGGPGQW…EVIRESSSTT (1606 aa)). A glycan (N-linked (GlcNAc...) asparagine) is linked at Asn60. An EGF-like 1 domain is found at 202–242 (ADPLCAPARNPCANGGLCTVLAPGEVGCDCSHTGFGGKFCS). 3 disulfide bridges follow: Cys206/Cys219, Cys213/Cys229, and Cys231/Cys241. 2 consecutive Laminin G-like domains span residues 289 to 486 (VATF…SFRC) and 493 to 686 (DPVT…APFC). Asp335 serves as a coordination point for Ca(2+). N-linked (GlcNAc...) asparagine glycosylation occurs at Asn338. 2 residues coordinate Ca(2+): Leu352 and Met420. Cystine bridges form between Cys450–Cys486, Cys657–Cys686, Cys694–Cys705, Cys699–Cys714, and Cys716–Cys726. In terms of domain architecture, EGF-like 2 spans 690 to 727 (TLKQCASAPCRNGGICREGWNRFVCDCIGTGFLGRVCE). 2 Laminin G-like domains span residues 732-904 (VLSY…ITYC) and 918-1093 (DPVT…ERGC). Ca(2+) contacts are provided by Asp779 and Leu796. An N-linked (GlcNAc...) asparagine glycan is attached at Asn841. Arg854 serves as a coordination point for Ca(2+). 4 cysteine pairs are disulfide-bonded: Cys1065/Cys1093, Cys1100/Cys1111, Cys1105/Cys1120, and Cys1122/Cys1132. In terms of domain architecture, EGF-like 3 spans 1096–1133 (PSTTCTEESCANQGVCLQQWDGFTCDCTMTSYGGPVCN). A Laminin G-like 6 domain is found at 1137-1345 (TTYIFGKGGA…HLRLVGEGPS (209 aa)). Asp1189, Val1206, Ile1288, and Asn1290 together coordinate Ca(2+). Ser1400 carries an O-linked (Xyl...) (heparan sulfate) serine glycan. Disordered regions lie at residues 1458–1508 (ATQD…LPPT) and 1587–1621 (EPRR…RGPP). Residues 1635–1655 (GMVVGIVAAAALCILILLYAM) form a helical membrane-spanning segment. Residues 1656–1710 (YKYRNRDEGSYQVDQSRNYISNSAQSNGAVVKEKAPAAPKTPSKAKKNKDKEYYV) lie on the Cytoplasmic side of the membrane. The disordered stretch occupies residues 1677-1710 (NSAQSNGAVVKEKAPAAPKTPSKAKKNKDKEYYV).

The laminin G-like domain 1 binds to NXPH1. Interacts with PATJ. Interacts with CBLN1, CBLN2 and, less avidly, with CBLN4. Specific isoforms bind neuroligins NLGN1, NLGN2 and NLGN3. Specific isoforms bind to alpha-dystroglycan. Interacts (via Laminin G-like 1 domain) with IGSF21 (Ig-like 1 domain) in a trans-interaction manner. Interacts with CLSTN3. Post-translationally, O-glycosylated; contains heparan sulfate. Heparan sulfate attachment is required for synapse development by mediating interactions with neuroligins.

It localises to the presynaptic cell membrane. Functionally, neuronal cell surface protein that may be involved in cell recognition and cell adhesion. May mediate intracellular signaling. This Mus musculus (Mouse) protein is Neurexin-2.